The following is a 543-amino-acid chain: Organic anion transporter 3 (543 aa).

The Cytoplasmic portion of the chain corresponds to 1–21; the sequence is MTFAELVDRVGSKGPFQLLHT. A helical transmembrane segment spans residues 22–42; the sequence is VLLGLPILGMANHNLLQIFTA. Over 43 to 124 the chain is Extracellular; sequence PTPAHHCRPP…LVCSSSKLKE (82 aa). N-linked (GlcNAc...) asparagine glycosylation is present at Asn81. The chain crosses the membrane as a helical span at residues 125–145; that stretch reads MAQSVFMAGILVGGLVLGALS. At 146–151 the chain is on the cytoplasmic side; it reads DRFGRK. Residues 152–172 form a helical membrane-spanning segment; it reads PILIFSYLLLGASGSGAAFSP. Residues 173–181 lie on the Extracellular side of the membrane; sequence TFSIYAVFR. The helical transmembrane segment at 182–202 threads the bilayer; it reads FLCGFSISGISLSTAILNVEW. The Cytoplasmic segment spans residues 203–212; it reads VSTRFRAIKS. The chain crosses the membrane as a helical span at residues 213–233; the sequence is IAVGFFYTFGQFILPGLAYAI. At 234–237 the chain is on the extracellular side; it reads PQWR. The helical transmembrane segment at 238–258 threads the bilayer; sequence WLQLTVSVPFLTFFLLSWWLP. The Cytoplasmic segment spans residues 259–328; the sequence is ESIRWMVLSG…FRTPVLRRVT (70 aa). The helical transmembrane segment at 329–349 threads the bilayer; that stretch reads LCLSLAWFATGFAYYSLAMGV. At 350-355 the chain is on the extracellular side; it reads EEFGVN. A helical membrane pass occupies residues 356 to 376; sequence LYVLQLIFGGVDVPAKFITML. Over 377–388 the chain is Cytoplasmic; it reads SISYLGRHITEG. A helical transmembrane segment spans residues 389-409; it reads IVLLLAGGCILALIFVPLDLM. The Extracellular segment spans residues 410 to 412; the sequence is TLR. Residues 413 to 433 traverse the membrane as a helical segment; it reads TVLAVFGKGCLSGSFSCLFLY. At 434 to 472 the chain is on the cytoplasmic side; sequence TSELYPTVIRQTGMGASNLWARVGSMTAPLVKITGELQP. A helical membrane pass occupies residues 473–493; that stretch reads FIPNIIFGTIALLGGSAALFL. Over 494 to 543 the chain is Extracellular; that stretch reads PETLNRPLPETIEDIETWSLRAKEPKPEPEAEKSSQRIPLQPCEPGPGPS. The tract at residues 513–543 is disordered; it reads LRAKEPKPEPEAEKSSQRIPLQPCEPGPGPS. Positions 514 to 528 are enriched in basic and acidic residues; it reads RAKEPKPEPEAEKSS.

Belongs to the major facilitator (TC 2.A.1) superfamily. Organic cation transporter (TC 2.A.1.19) family. Expressed in kidney.

Its subcellular location is the basolateral cell membrane. It carries out the reaction estrone 3-sulfate(out) + glutarate(in) = estrone 3-sulfate(in) + glutarate(out). The enzyme catalyses estrone 3-sulfate(in) + 2-oxoglutarate(out) = estrone 3-sulfate(out) + 2-oxoglutarate(in). It catalyses the reaction glutarate(in) + 2-oxoglutarate(out) = glutarate(out) + 2-oxoglutarate(in). The catalysed reaction is urate(in) + 2-oxoglutarate(out) = urate(out) + 2-oxoglutarate(in). It carries out the reaction taurocholate(out) + glutarate(in) = taurocholate(in) + glutarate(out). The enzyme catalyses dehydroepiandrosterone 3-sulfate(out) + glutarate(in) = dehydroepiandrosterone 3-sulfate(in) + glutarate(out). It catalyses the reaction prostaglandin F2alpha(out) + glutarate(in) = prostaglandin F2alpha(in) + glutarate(out). The catalysed reaction is prostaglandin F2alpha(out) + 2-oxoglutarate(in) = prostaglandin F2alpha(in) + 2-oxoglutarate(out). It carries out the reaction (R)-carnitine(out) + 2-oxoglutarate(in) = (R)-carnitine(in) + 2-oxoglutarate(out). The enzyme catalyses glutarate(in) + (R)-carnitine(out) = glutarate(out) + (R)-carnitine(in). It catalyses the reaction prostaglandin E2(out) + 2-oxoglutarate(in) = prostaglandin E2(in) + 2-oxoglutarate(out). The catalysed reaction is prostaglandin E2(out) + glutarate(in) = prostaglandin E2(in) + glutarate(out). It carries out the reaction urate(in) + glutarate(out) = urate(out) + glutarate(in). The enzyme catalyses taurocholate(out) + 2-oxoglutarate(in) = taurocholate(in) + 2-oxoglutarate(out). It catalyses the reaction dehydroepiandrosterone 3-sulfate(out) + 2-oxoglutarate(in) = dehydroepiandrosterone 3-sulfate(in) + 2-oxoglutarate(out). The catalysed reaction is kynurenate(out) + a dicarboxylate(in) = kynurenate(in) + a dicarboxylate(out). It carries out the reaction (indol-3-yl)acetate(out) + a dicarboxylate(in) = (indol-3-yl)acetate(in) + a dicarboxylate(out). The enzyme catalyses indoxyl sulfate(out) + a dicarboxylate(in) = indoxyl sulfate(in) + a dicarboxylate(out). It catalyses the reaction N-benzoylglycine(out) + a dicarboxylate(in) = N-benzoylglycine(in) + a dicarboxylate(out). The catalysed reaction is 3-carboxy-4-methyl-5-propyl-2-furanpropanoate(out) + a dicarboxylate(in) = 3-carboxy-4-methyl-5-propyl-2-furanpropanoate(in) + a dicarboxylate(out). It carries out the reaction (6R)-L-erythro-5,6,7,8-tetrahydrobiopterin(out) + a dicarboxylate(in) = (6R)-L-erythro-5,6,7,8-tetrahydrobiopterin(in) + a dicarboxylate(out). The enzyme catalyses L-erythro-7,8-dihydrobiopterin(out) + a dicarboxylate(in) = L-erythro-7,8-dihydrobiopterin(in) + a dicarboxylate(out). It catalyses the reaction L-sepiapterin(out) + a dicarboxylate(in) = L-sepiapterin(in) + a dicarboxylate(out). Its function is as follows. Functions as an organic anion/dicarboxylate exchanger that couples organic anion uptake indirectly to the sodium gradient. Transports organic anions such as estrone 3-sulfate (E1S) and urate in exchange for dicarboxylates such as glutarate or ketoglutarate (2-oxoglutarate). Plays an important role in the excretion of endogenous and exogenous organic anions, especially from the kidney and the brain. E1S transport is pH- and chloride-dependent and may also involve E1S/cGMP exchange. Responsible for the transport of prostaglandin E2 (PGE2) and prostaglandin F2(alpha) (PGF2(alpha)) in the basolateral side of the renal tubule. Involved in the transport of neuroactive tryptophan metabolites kynurenate and xanthurenate. Functions as a biopterin transporters involved in the uptake and the secretion of coenzymes tetrahydrobiopterin (BH4), dihydrobiopterin (BH2) and sepiapterin to urine, thereby determining baseline levels of blood biopterins. May be involved in the basolateral transport of steviol, a metabolite of the popular sugar substitute stevioside. May participate in the detoxification/ renal excretion of drugs and xenobiotics, such as the histamine H(2)-receptor antagonists fexofenadine and cimetidine, the antibiotic benzylpenicillin (PCG), the anionic herbicide 2,4-dichloro-phenoxyacetate (2,4-D), the diagnostic agent p-aminohippurate (PAH), the antiviral acyclovir (ACV), and the mycotoxin ochratoxin (OTA), by transporting these exogenous organic anions across the cell membrane in exchange for dicarboxylates such as 2-oxoglutarate. Contributes to the renal uptake of potent uremic toxins (indoxyl sulfate (IS), indole acetate (IA), hippurate/N-benzoylglycine (HA) and 3-carboxy-4-methyl-5-propyl-2-furanpropionate (CMPF)), pravastatin, PCG, E1S and dehydroepiandrosterone sulfate (DHEAS), and is partly involved in the renal uptake of temocaprilat (an angiotensin-converting enzyme (ACE) inhibitor). May contribute to the release of cortisol in the adrenals. Involved in one of the detoxification systems on the choroid plexus (CP), removes substrates such as E1S or taurocholate (TC), PCG, 2,4-D and PAH, from the cerebrospinal fluid (CSF) to the blood for eventual excretion in urine and bile. Also contributes to the uptake of several other organic compounds such as the prostanoids prostaglandin E(2) and prostaglandin F(2-alpha), L-carnitine, and the therapeutic drugs allopurinol, 6-mercaptopurine (6-MP) and 5-fluorouracil (5-FU). Mediates the transport of PAH, PCG, and the statins pravastatin and pitavastatin, from the cerebrum into the blood circulation across the blood-brain barrier (BBB). In summary, plays a role in the efflux of drugs and xenobiotics, helping reduce their undesired toxicological effects on the body. The polypeptide is Organic anion transporter 3 (SLC22A8) (Sus scrofa (Pig)).